The chain runs to 240 residues: Lactate utilization protein C (240 aa).

Belongs to the LutC/YkgG family.

Functionally, is involved in L-lactate degradation and allows cells to grow with lactate as the sole carbon source. The chain is Lactate utilization protein C from Geobacillus thermodenitrificans (strain NG80-2).